The following is a 161-amino-acid chain: Alpha-crystallin A chain (161 aa).

Met1 bears the N-acetylmethionine mark. The required for complex formation with BFSP1 and BFSP2 stretch occupies residues 1–53 (MDVTIQHPWFKRALGPFYHNRLFDQFFGEGLFEYDLLPFQSLFRTVLDSGISE). Gln6 and Gln40 each carry deamidated glutamine; partial. The 110-residue stretch at 41–150 (SLFRTVLDSG…SHSERAIPVS (110 aa)) folds into the sHSP domain. Residue Lys87 is modified to N6-acetyllysine. Zn(2+) is bound at residue His88. At Asn89 the chain carries Deamidated asparagine; partial. Residues Glu90 and His95 each contribute to the Zn(2+) site. Phosphoserine is present on Ser110. A Deamidated asparagine; partial modification is found at Asn111. A disulfide bond links Cys119 and Cys130. Gln135 carries the post-translational modification Deamidated glutamine; partial. A disordered region spans residues 135–161 (QSGMDASHSERAIPVSREEKASSAPNS). Residues 141-155 (SHSERAIPVSREEKA) are compositionally biased toward basic and acidic residues. His142 contributes to the Zn(2+) binding site. Ser150 carries an O-linked (GlcNAc) serine glycan.

It belongs to the small heat shock protein (HSP20) family. In terms of assembly, heteromer composed of three CRYAA and one CRYAB subunits. Inter-subunit bridging via zinc ions enhances stability, which is crucial as there is no protein turn over in the lens. Can also form homodimers and homotetramers (dimers of dimers) which serve as the building blocks of homooligomers. Within homooligomers, the zinc-binding motif is created from residues of 3 different molecules. His-88 and Glu-90 from one molecule are ligands of the zinc ion, and His-95 and His-142 residues from additional molecules complete the site with tetrahedral coordination geometry. Part of a complex required for lens intermediate filament formation composed of BFSP1, BFSP2 and CRYAA. Undergoes age-dependent proteolytical cleavage at the C-terminus.

The protein localises to the cytoplasm. It is found in the nucleus. Contributes to the transparency and refractive index of the lens. In its oxidized form (absence of intramolecular disulfide bond), acts as a chaperone, preventing aggregation of various proteins under a wide range of stress conditions. Required for the correct formation of lens intermediate filaments as part of a complex composed of BFSP1, BFSP2 and CRYAA. The chain is Alpha-crystallin A chain (CRYAA) from Trichechus inunguis (Amazon manatee).